A 240-amino-acid chain; its full sequence is Aspartate/glutamate leucyltransferase (240 aa).

The protein belongs to the R-transferase family. Bpt subfamily.

The protein localises to the cytoplasm. The catalysed reaction is N-terminal L-glutamyl-[protein] + L-leucyl-tRNA(Leu) = N-terminal L-leucyl-L-glutamyl-[protein] + tRNA(Leu) + H(+). It carries out the reaction N-terminal L-aspartyl-[protein] + L-leucyl-tRNA(Leu) = N-terminal L-leucyl-L-aspartyl-[protein] + tRNA(Leu) + H(+). In terms of biological role, functions in the N-end rule pathway of protein degradation where it conjugates Leu from its aminoacyl-tRNA to the N-termini of proteins containing an N-terminal aspartate or glutamate. The protein is Aspartate/glutamate leucyltransferase of Thiobacillus denitrificans (strain ATCC 25259 / T1).